The following is a 218-amino-acid chain: Ras-related protein Rab-4A (218 aa).

Residues Gly-23, Thr-24, Gly-25, Lys-26, Ser-27, Cys-28, Ser-42, His-44, and Thr-45 each coordinate GTP. Ser-27 contacts Mg(2+). The short motif at 44–49 (HTIGVE) is the Switch 1 element. Mg(2+) is bound by residues Thr-45 and Asp-68. The Switch 2 signature appears at 70–79 (AGQERFRSVT). Gly-71 lines the GTP pocket. Gln-72 is modified (5-glutamyl serotonin). The GTP site is built by Asn-126, Lys-127, Asp-129, Ala-157, and Leu-158. Ser-190 is subject to Phosphoserine. Ser-204 carries the phosphoserine; by CDK1 modification. S-geranylgeranyl cysteine attachment occurs at residues Cys-216 and Cys-218. Cys-218 carries the cysteine methyl ester modification.

Belongs to the small GTPase superfamily. Rab family. As to quaternary structure, interacts with SGSM1, SGSM2 and SGSM3. Interacts with RAB11FIP1, RABEP1, ZFYVE20 and RUFY1. Interacts (membrane-bound form) with NDRG1; the interaction involves NDRG1 in vesicular recycling of E-cadherin. Interacts (in GTP-bound form) with GRIPAP1 (via N-terminus). Interacts with RABEP1 and RBSN. Does not interact with HPS4. Interacts with RABEP2; this interaction may mediate VEGFR2 cell surface expression. Mg(2+) is required as a cofactor. Serotonylation of Gln-72 by TGM2 during activation and aggregation of platelets leads to constitutive activation of GTPase activity. In terms of processing, phosphorylated by CDK1 kinase during mitosis.

The protein localises to the membrane. It localises to the cytoplasm. Its subcellular location is the early endosome membrane. The protein resides in the recycling endosome membrane. It carries out the reaction GTP + H2O = GDP + phosphate + H(+). With respect to regulation, regulated by guanine nucleotide exchange factors (GEFs) which promote the exchange of bound GDP for free GTP. Regulated by GTPase activating proteins (GAPs) which increase the GTP hydrolysis activity. Inhibited by GDP dissociation inhibitors (GDIs). In terms of biological role, the small GTPases Rab are key regulators of intracellular membrane trafficking, from the formation of transport vesicles to their fusion with membranes. Rabs cycle between an inactive GDP-bound form and an active GTP-bound form that is able to recruit to membranes different sets of downstream effectors directly responsible for vesicle formation, movement, tethering and fusion. RAB4A is involved in protein transport. Also plays a role in vesicular traffic. Mediates VEGFR2 endosomal trafficking to enhance VEGFR2 signaling. Acts as a regulator of platelet alpha-granule release during activation and aggregation of platelets. The chain is Ras-related protein Rab-4A from Rattus norvegicus (Rat).